A 426-amino-acid polypeptide reads, in one-letter code: Protein trichome birefringence-like 19 (426 aa).

The chain crosses the membrane as a helical; Signal-anchor for type II membrane protein span at residues leucine 15–leucine 35. The GDS motif motif lies at glycine 142–serine 144. Residues aspartate 388–asparagine 402 carry the DCXHWCLPGXXDXWN motif motif.

Belongs to the PC-esterase family. TBL subfamily.

The protein resides in the membrane. In terms of biological role, may act as a bridging protein that binds pectin and other cell wall polysaccharides. Probably involved in maintaining esterification of pectins. May be involved in the specific O-acetylation of cell wall polymers. This chain is Protein trichome birefringence-like 19 (TBL19), found in Arabidopsis thaliana (Mouse-ear cress).